Consider the following 496-residue polypeptide: Probable cytosol aminopeptidase (496 aa).

The Mn(2+) site is built by lysine 266 and aspartate 271. Lysine 278 is an active-site residue. Residues aspartate 289, aspartate 348, and glutamate 350 each coordinate Mn(2+). The active site involves arginine 352.

It belongs to the peptidase M17 family. Requires Mn(2+) as cofactor.

Its subcellular location is the cytoplasm. It catalyses the reaction Release of an N-terminal amino acid, Xaa-|-Yaa-, in which Xaa is preferably Leu, but may be other amino acids including Pro although not Arg or Lys, and Yaa may be Pro. Amino acid amides and methyl esters are also readily hydrolyzed, but rates on arylamides are exceedingly low.. It carries out the reaction Release of an N-terminal amino acid, preferentially leucine, but not glutamic or aspartic acids.. Presumably involved in the processing and regular turnover of intracellular proteins. Catalyzes the removal of unsubstituted N-terminal amino acids from various peptides. This Azotobacter vinelandii (strain DJ / ATCC BAA-1303) protein is Probable cytosol aminopeptidase.